Here is a 149-residue protein sequence, read N- to C-terminus: Transcriptional repressor NrdR (149 aa).

The segment at 3–34 is a zinc-finger region; it reads CPFCAAVDTKVIDSRLVSDGSQVRRRRQCLDC. Residues 49 to 139 enclose the ATP-cone domain; the sequence is PRVIKSDEVR…VYRSFEDVRE (91 aa).

This sequence belongs to the NrdR family. Zn(2+) is required as a cofactor.

Functionally, negatively regulates transcription of bacterial ribonucleotide reductase nrd genes and operons by binding to NrdR-boxes. This Yersinia pseudotuberculosis serotype O:1b (strain IP 31758) protein is Transcriptional repressor NrdR.